A 181-amino-acid polypeptide reads, in one-letter code: Large ribosomal subunit protein eL18 (181 aa).

Belongs to the eukaryotic ribosomal protein eL18 family.

Its subcellular location is the cytoplasm. The polypeptide is Large ribosomal subunit protein eL18 (rpl18) (Dictyostelium discoideum (Social amoeba)).